The following is a 464-amino-acid chain: Argininosuccinate lyase (464 aa).

Belongs to the lyase 1 family. Argininosuccinate lyase subfamily.

Its subcellular location is the cytoplasm. The enzyme catalyses 2-(N(omega)-L-arginino)succinate = fumarate + L-arginine. The protein operates within amino-acid biosynthesis; L-arginine biosynthesis; L-arginine from L-ornithine and carbamoyl phosphate: step 3/3. Strongly inhibited by L-arginine. Inhibitory effects are lowered at pH 7.0 compared to those at pH 8.0. At 37 degrees Celsius and pH 7.5, activity decreases to 73% and 31% in the presence of 1 mM and 10 mM arginine, respectively. Activity also decreases to 84%, 93%, 82% and 85% in the presence of 10 mM sodium citrate, citrulline, asparatate and glutamate, respectively. Activity decreases to 96% in presence of 1 mM L-lysine. Catalyzes the last step of arginine biosynthesis, the conversion of argininosuccinate into L-arginine and fumarate. This chain is Argininosuccinate lyase, found in Arthrospira platensis (strain NIES-39 / UTEX 3086 / IAM M-135) (Spirulina platensis).